We begin with the raw amino-acid sequence, 339 residues long: MIRKIYDKLVESHNEIKNQIYNIANYLKQEIQDKVNEYWNEYVINHEQSETCKFVAIDGGSFGRPMRIGIVYAVGAESVIGDNKGVKTLSEDGQIGIFKPGNDAQERISLLMEALELSLALRDGSKGDYILMDGSLSKKIGNKVDIQQFSDEELKLIRNVDLNGIISIKDERKMRDLLMLLNQFLVSKIIEEYDGNVLWISKVSRGRDLFGTDYPDITVLELFTEKRGFSKLIIKNIDIEKISEIPEIEVLRKMEYTTFYTRLDNGKRVIRVDIVGRVDEKIVKEIMDRLSGVSIKGYPFPLLKAHMDVRFSAMDREKIIKLVGSKLHKDIEWWPSQFY.

2 residues coordinate Mn(2+): D58 and D133.

It belongs to the NurA family. Homodimer. Forms a complex with HerA. The cofactor is Mn(2+).

Nuclease activity requires the presence of HerA. Another report shows endo- and exonuclease activity in the absence of HerA; HerA stimulates the exo- but not endonuclease. LhrC-Core (Hel112) inhibits the exonuclease activity of the HerA-NurA complex on ss- and dsDNA, has no effect on the nicking activity of NurA. Endo- and exonuclease activities are inhibited by ATP; ATP may subtract divalent ions from the reaction preventing nuclease activity, HerA can alleviate ATP inhibition. Its function is as follows. Involved in DNA double-strand break (DSB) repair. Probably acts with HerA to stimulate resection of the 5' strand and produce the long 3' single-strand that is required for RadA loading. NurA and HerA together stimulate the end-resection of six nucleotides of a linear DNA substrate. Processes linear double-stranded (ds)DNA probes with 3' or 5' single-stranded overhangs or blunt ends. Has endonuclease activity on single-stranded (ss)DNA and nicking activity on dsDNA without HerA as well as 5'- and 3'-exonuclease activity on ssDNA. Binds ssDNA, dsDNA, forked and bubble DNA equally well. The polypeptide is DNA double-strand break repair nuclease NurA (Saccharolobus solfataricus (strain ATCC 35092 / DSM 1617 / JCM 11322 / P2) (Sulfolobus solfataricus)).